The chain runs to 397 residues: ORC1-type DNA replication protein 1 (397 aa).

ATP-binding positions include 67–71 (TGKTA), Y208, and R220.

It belongs to the CDC6/cdc18 family.

Functionally, involved in regulation of DNA replication. This is ORC1-type DNA replication protein 1 (cdc6-1) from Sulfolobus acidocaldarius (strain ATCC 33909 / DSM 639 / JCM 8929 / NBRC 15157 / NCIMB 11770).